Reading from the N-terminus, the 276-residue chain is NADH-cytochrome b5 reductase 2 (276 aa).

An FAD-binding FR-type domain is found at 15–127 (EAKYPLPLIE…RGPTGRLFYN (113 aa)). An N6-acetyllysine modification is found at Lys17. At Tyr18 the chain carries Phosphotyrosine. FAD contacts are provided by residues 107–137 (ENMK…IKTD) and 146–181 (LVHH…RMSL).

This sequence belongs to the flavoprotein pyridine nucleotide cytochrome reductase family. FAD serves as cofactor.

The catalysed reaction is 2 Fe(III)-[cytochrome b5] + NADH = 2 Fe(II)-[cytochrome b5] + NAD(+) + H(+). Its function is as follows. NADH-cytochrome b5 reductases are involved in desaturation and elongation of fatty acids, cholesterol biosynthesis, drug metabolism, and, in erythrocyte, methemoglobin reduction. Responsible for NADH-dependent lucigenin chemiluminescence in spermatozoa by reducing both lucigenin and 2-[4-iodophenyl]-3-[4-nitrophenyl]-5-[2,4-disulfophenyl]-2H tetrazolium monosodium salt (WST-1). This is NADH-cytochrome b5 reductase 2 (Cyb5r2) from Rattus norvegicus (Rat).